The following is a 388-amino-acid chain: Succinate--CoA ligase [ADP-forming] subunit beta (388 aa).

In terms of domain architecture, ATP-grasp spans 9–244; it reads KQLFARYGLP…QSQEDPREAQ (236 aa). ATP contacts are provided by residues Lys46, 53–55, Glu99, Thr102, and Glu107; that span reads GRG. Mg(2+) contacts are provided by Asn199 and Asp213. Substrate contacts are provided by residues Asn264 and 321 to 323; that span reads GIV.

The protein belongs to the succinate/malate CoA ligase beta subunit family. In terms of assembly, heterotetramer of two alpha and two beta subunits. The cofactor is Mg(2+).

The enzyme catalyses succinate + ATP + CoA = succinyl-CoA + ADP + phosphate. It catalyses the reaction GTP + succinate + CoA = succinyl-CoA + GDP + phosphate. The protein operates within carbohydrate metabolism; tricarboxylic acid cycle; succinate from succinyl-CoA (ligase route): step 1/1. In terms of biological role, succinyl-CoA synthetase functions in the citric acid cycle (TCA), coupling the hydrolysis of succinyl-CoA to the synthesis of either ATP or GTP and thus represents the only step of substrate-level phosphorylation in the TCA. The beta subunit provides nucleotide specificity of the enzyme and binds the substrate succinate, while the binding sites for coenzyme A and phosphate are found in the alpha subunit. This chain is Succinate--CoA ligase [ADP-forming] subunit beta, found in Salmonella dublin (strain CT_02021853).